The chain runs to 455 residues: F-box/LRR-repeat protein At5g35995 (455 aa).

The region spanning 4–51 (RDFISSLPDEVLGKKILSLLPTKLVVSTSVLSKRWRNLFHFVDSFDLE) is the F-box domain. 5 LRR repeats span residues 114-138 (DHYL…SYRT), 152-176 (FPAL…LISG), 282-305 (IRNV…CYTM), 308-324 (FDKL…ENGW), and 325-348 (QALP…LLHK).

This Arabidopsis thaliana (Mouse-ear cress) protein is F-box/LRR-repeat protein At5g35995.